Here is a 206-residue protein sequence, read N- to C-terminus: Large ribosomal subunit protein uL4 (206 aa).

Residues 43-52 (NKRQGTQSAK) show a composition bias toward polar residues. Residues 43-86 (NKRQGTQSAKTRAEVSGGGRKPWRQKGTGHARQGSTRSPQWKGG) are disordered.

Belongs to the universal ribosomal protein uL4 family. As to quaternary structure, part of the 50S ribosomal subunit.

Functionally, one of the primary rRNA binding proteins, this protein initially binds near the 5'-end of the 23S rRNA. It is important during the early stages of 50S assembly. It makes multiple contacts with different domains of the 23S rRNA in the assembled 50S subunit and ribosome. Forms part of the polypeptide exit tunnel. The protein is Large ribosomal subunit protein uL4 of Lachnoclostridium phytofermentans (strain ATCC 700394 / DSM 18823 / ISDg) (Clostridium phytofermentans).